The chain runs to 319 residues: Biotin synthase (319 aa).

Positions Y41–R267 constitute a Radical SAM core domain. 3 residues coordinate [4Fe-4S] cluster: C59, C63, and C66. A [2Fe-2S] cluster-binding site is contributed by C192.

The protein belongs to the radical SAM superfamily. Biotin synthase family. In terms of assembly, homodimer. [4Fe-4S] cluster serves as cofactor. The cofactor is [2Fe-2S] cluster.

It carries out the reaction (4R,5S)-dethiobiotin + (sulfur carrier)-SH + 2 reduced [2Fe-2S]-[ferredoxin] + 2 S-adenosyl-L-methionine = (sulfur carrier)-H + biotin + 2 5'-deoxyadenosine + 2 L-methionine + 2 oxidized [2Fe-2S]-[ferredoxin]. The protein operates within cofactor biosynthesis; biotin biosynthesis; biotin from 7,8-diaminononanoate: step 2/2. Functionally, catalyzes the conversion of dethiobiotin (DTB) to biotin by the insertion of a sulfur atom into dethiobiotin via a radical-based mechanism. The sequence is that of Biotin synthase from Endomicrobium trichonymphae.